The primary structure comprises 394 residues: Phenylalanine 4-monooxygenase, chloroplastic (394 aa).

The transit peptide at 1–79 directs the protein to the chloroplast; the sequence is MAMEVGYLRH…LNQIQAVSTA (79 aa). Positions 75 to 97 are disordered; that stretch reads AVSTAEKEREADKTSTPPIPSSI. Fe cation-binding residues include histidine 252, histidine 257, and glutamate 297.

Belongs to the biopterin-dependent aromatic amino acid hydroxylase family. In terms of assembly, forms monomers. It depends on Fe(2+) as a cofactor.

The protein localises to the plastid. The protein resides in the chloroplast. It carries out the reaction (6R)-L-erythro-5,6,7,8-tetrahydrobiopterin + L-phenylalanine + O2 = (4aS,6R)-4a-hydroxy-L-erythro-5,6,7,8-tetrahydrobiopterin + L-tyrosine. In terms of biological role, catalyzes the hydroxylation of L-phenylalanine to L-tyrosine. Does not seem to be tetrahydropterin-dependent and shows preference for 10-formyltetrahydrofolate as cosubstrate and electron donor. This Physcomitrium patens (Spreading-leaved earth moss) protein is Phenylalanine 4-monooxygenase, chloroplastic.